A 30-amino-acid chain; its full sequence is Trypsin inhibitor 3 (30 aa).

Glutamine 1 is subject to Pyrrolidone carboxylic acid. 3 cysteine pairs are disulfide-bonded: cysteine 4-cysteine 21, cysteine 11-cysteine 23, and cysteine 17-cysteine 29.

The protein localises to the secreted. Its function is as follows. Inhibits trypsin; probably participates in a plant defense mechanism. The chain is Trypsin inhibitor 3 from Momordica cochinchinensis (Spiny bitter cucumber).